We begin with the raw amino-acid sequence, 429 residues long: Homocysteine synthase (429 aa).

K210 carries the post-translational modification N6-(pyridoxal phosphate)lysine.

The protein belongs to the trans-sulfuration enzymes family. Homotetramer. Pyridoxal 5'-phosphate is required as a cofactor.

The protein resides in the cytoplasm. The protein localises to the nucleus. It catalyses the reaction O-acetyl-L-homoserine + methanethiol = L-methionine + acetate + H(+). The catalysed reaction is O-acetyl-L-homoserine + hydrogen sulfide = L-homocysteine + acetate. It functions in the pathway amino-acid biosynthesis; L-methionine biosynthesis via de novo pathway; L-homocysteine from O-acetyl-L-homoserine. Catalyzes the conversion of O-acetyl-L-homoserine (OAH) into homocysteine in the methionine biosynthesis pathway. Can also use O-succinyl-L-homoserine and L-homoserine as substrates. Also has cysteine synthase (O-acetylserine sulfhydrylase) activity in vitro, but in S.pombe, it seems only to be involved in the alternative pathway of methionine biosynthesis under cysteine deficiency conditions. The protein is Homocysteine synthase of Schizosaccharomyces pombe (strain 972 / ATCC 24843) (Fission yeast).